The chain runs to 507 residues: ATP synthase subunit alpha, mitochondrial (507 aa).

Residue 171 to 178 (GDRQTGKT) coordinates ATP.

The protein belongs to the ATPase alpha/beta chains family. As to quaternary structure, F-type ATPases have 2 components, CF(1) - the catalytic core - and CF(0) - the membrane proton channel. CF(1) has five subunits: alpha(3), beta(3), gamma(1), delta(1), epsilon(1). CF(0) has three main subunits: a, b and c.

The protein localises to the mitochondrion. The protein resides in the mitochondrion inner membrane. Functionally, mitochondrial membrane ATP synthase (F(1)F(0) ATP synthase or Complex V) produces ATP from ADP in the presence of a proton gradient across the membrane which is generated by electron transport complexes of the respiratory chain. F-type ATPases consist of two structural domains, F(1) - containing the extramembraneous catalytic core, and F(0) - containing the membrane proton channel, linked together by a central stalk and a peripheral stalk. During catalysis, ATP synthesis in the catalytic domain of F(1) is coupled via a rotary mechanism of the central stalk subunits to proton translocation. Subunits alpha and beta form the catalytic core in F(1). Rotation of the central stalk against the surrounding alpha(3)beta(3) subunits leads to hydrolysis of ATP in three separate catalytic sites on the beta subunits. Subunit alpha does not bear the catalytic high-affinity ATP-binding sites. The chain is ATP synthase subunit alpha, mitochondrial (ATPA) from Arabidopsis thaliana (Mouse-ear cress).